We begin with the raw amino-acid sequence, 402 residues long: Imidazolonepropionase (402 aa).

The Fe(3+) site is built by His-66 and His-68. Zn(2+)-binding residues include His-66 and His-68. Positions 75, 138, and 171 each coordinate 4-imidazolone-5-propanoate. Residue Tyr-138 participates in N-formimidoyl-L-glutamate binding. His-236 provides a ligand contact to Fe(3+). His-236 contributes to the Zn(2+) binding site. Gln-239 serves as a coordination point for 4-imidazolone-5-propanoate. Asp-311 provides a ligand contact to Fe(3+). Asp-311 is a Zn(2+) binding site. Residues Asn-313 and Gly-315 each coordinate N-formimidoyl-L-glutamate. Residue Thr-316 participates in 4-imidazolone-5-propanoate binding.

Belongs to the metallo-dependent hydrolases superfamily. HutI family. Zn(2+) serves as cofactor. It depends on Fe(3+) as a cofactor.

It localises to the cytoplasm. It carries out the reaction 4-imidazolone-5-propanoate + H2O = N-formimidoyl-L-glutamate. Its pathway is amino-acid degradation; L-histidine degradation into L-glutamate; N-formimidoyl-L-glutamate from L-histidine: step 3/3. Its function is as follows. Catalyzes the hydrolytic cleavage of the carbon-nitrogen bond in imidazolone-5-propanoate to yield N-formimidoyl-L-glutamate. It is the third step in the universal histidine degradation pathway. In Pseudomonas aeruginosa (strain UCBPP-PA14), this protein is Imidazolonepropionase.